A 317-amino-acid polypeptide reads, in one-letter code: MSTTFLSVMAGLSGIVVFGALISVFHIYTDINSFVDEAHRELGAFRGVANDAWNSMVNHDDSARVARSVFVRRQKKQSQCNCGPQASNCPAGPPGPPGASGDRGLDGQPGPAGKPGQPGVAGPAHHQQQECIKCPQGAPGPAGAPGNPGPQGPNGNPGAPAHGGGQGPPGPPGPAGDAGSPGQAGAPGNPGRPGQSGQRSRGLPGPSGRPGPQGPPGAPGQPGSGSTPGPAGPPGPPGPNGQPGHPGQDGQPGAPGNDGAPGSDAAYCPCPARSAAVFRHRNVAVNRHRAVAKKRVVAKKRVVARKRVVAARRHVQA.

Residues 80–262 (CNCGPQASNC…GAPGNDGAPG (183 aa)) form a disordered region. Triple-helical region stretches follow at residues 92–124 (GPPG…AGPA), 137–199 (GAPG…SGQR), and 202–264 (GLPG…PGSD). Low complexity-rich tracts occupy residues 108 to 124 (QPGP…AGPA), 135 to 145 (PQGAPGPAGAP), and 175 to 206 (AGDA…LPGP). 2 stretches are compositionally biased toward pro residues: residues 207 to 219 (SGRP…PGAP) and 230 to 240 (PAGPPGPPGPN). The span at 242–262 (QPGHPGQDGQPGAPGNDGAPG) shows a compositional bias: low complexity.

It belongs to the cuticular collagen family. As to quaternary structure, collagen polypeptide chains are complexed within the cuticle by disulfide bonds and other types of covalent cross-links.

In terms of biological role, nematode cuticles are composed largely of collagen-like proteins. The cuticle functions both as an exoskeleton and as a barrier to protect the worm from its environment. This chain is Putative cuticle collagen 80 (col-80), found in Caenorhabditis elegans.